Consider the following 466-residue polypeptide: 3-isopropylmalate dehydratase large subunit (466 aa).

3 residues coordinate [4Fe-4S] cluster: C347, C407, and C410.

It belongs to the aconitase/IPM isomerase family. LeuC type 1 subfamily. In terms of assembly, heterodimer of LeuC and LeuD. [4Fe-4S] cluster serves as cofactor.

The catalysed reaction is (2R,3S)-3-isopropylmalate = (2S)-2-isopropylmalate. It functions in the pathway amino-acid biosynthesis; L-leucine biosynthesis; L-leucine from 3-methyl-2-oxobutanoate: step 2/4. Its function is as follows. Catalyzes the isomerization between 2-isopropylmalate and 3-isopropylmalate, via the formation of 2-isopropylmaleate. The polypeptide is 3-isopropylmalate dehydratase large subunit (Escherichia coli (strain 55989 / EAEC)).